We begin with the raw amino-acid sequence, 439 residues long: Ribosomal protein uS12 methylthiotransferase RimO (439 aa).

Residues 4-114 form the MTTase N-terminal domain; that stretch reads PKVGFVSLGC…VVRAVHGVAP (111 aa). [4Fe-4S] cluster-binding residues include cysteine 13, cysteine 49, cysteine 78, cysteine 147, cysteine 151, and cysteine 154. Residues 133-370 form the Radical SAM core domain; sequence LTPRHYAYLK…MEHQQAISTA (238 aa). A TRAM domain is found at 373–439; that stretch reads STRVGREIDV…EYDLWGERIA (67 aa).

Belongs to the methylthiotransferase family. RimO subfamily. The cofactor is [4Fe-4S] cluster.

It localises to the cytoplasm. It carries out the reaction L-aspartate(89)-[ribosomal protein uS12]-hydrogen + (sulfur carrier)-SH + AH2 + 2 S-adenosyl-L-methionine = 3-methylsulfanyl-L-aspartate(89)-[ribosomal protein uS12]-hydrogen + (sulfur carrier)-H + 5'-deoxyadenosine + L-methionine + A + S-adenosyl-L-homocysteine + 2 H(+). Functionally, catalyzes the methylthiolation of an aspartic acid residue of ribosomal protein uS12. The chain is Ribosomal protein uS12 methylthiotransferase RimO from Bordetella parapertussis (strain 12822 / ATCC BAA-587 / NCTC 13253).